A 363-amino-acid polypeptide reads, in one-letter code: Putative dipeptidase YkvY (363 aa).

Mn(2+) is bound by residues Asp-222, Asp-233, His-297, Glu-326, and Glu-340.

It belongs to the peptidase M24B family. Requires Mn(2+) as cofactor.

The polypeptide is Putative dipeptidase YkvY (ykvY) (Bacillus subtilis (strain 168)).